We begin with the raw amino-acid sequence, 324 residues long: MATH domain and coiled-coil domain-containing protein At3g44790 (324 aa).

In terms of domain architecture, MATH spans 3-125 (YEKFTWVIKN…NNEVKIVVEV (123 aa)). A coiled-coil region spans residues 241–309 (FKVDWLERKL…ALLEKEKAKS (69 aa)).

In Arabidopsis thaliana (Mouse-ear cress), this protein is MATH domain and coiled-coil domain-containing protein At3g44790.